The following is a 155-amino-acid chain: Ribosomal RNA large subunit methyltransferase H (155 aa).

S-adenosyl-L-methionine is bound at residue Gly103.

It belongs to the RNA methyltransferase RlmH family. Homodimer.

It localises to the cytoplasm. The catalysed reaction is pseudouridine(1915) in 23S rRNA + S-adenosyl-L-methionine = N(3)-methylpseudouridine(1915) in 23S rRNA + S-adenosyl-L-homocysteine + H(+). Its function is as follows. Specifically methylates the pseudouridine at position 1915 (m3Psi1915) in 23S rRNA. In Caulobacter vibrioides (strain ATCC 19089 / CIP 103742 / CB 15) (Caulobacter crescentus), this protein is Ribosomal RNA large subunit methyltransferase H.